The primary structure comprises 265 residues: AT-hook motif nuclear-localized protein 18 (265 aa).

The disordered stretch occupies residues 1 to 75 (MDEVSRSHTP…AGSKNKPKAP (75 aa)). The segment covering 19 to 30 (HYHHQNAGRQKR) has biased composition (basic residues). Residues 59 to 71 (RRPRGRPAGSKNK) constitute a DNA-binding region (a.T hook). Residues 83–217 (ANAFRCHVME…EEEETEREID (135 aa)) enclose the PPC domain.

The protein localises to the nucleus. Transcription factor that specifically binds AT-rich DNA sequences related to the nuclear matrix attachment regions (MARs). Acts redundantly with AHL22, AHL27 and AHL29 in the regulation of flowering and regulation of the hypocotyl elongation. This Arabidopsis thaliana (Mouse-ear cress) protein is AT-hook motif nuclear-localized protein 18.